The chain runs to 374 residues: Actin-related protein 2/3 complex subunit 2B (374 aa).

Belongs to the ARPC2 family. In terms of assembly, component of the Arp2/3 complex composed of ARP2, ARP3, ARPC1/p41-ARC, ARPC2/p34-ARC, ARPC3/p21-ARC, ARPC4/p20-ARC and ARPC5/p16-ARC. In terms of tissue distribution, expressed at low levels in all tissues with a relatively highest expression in inflorescences.

Its subcellular location is the cytoplasm. It is found in the cytoskeleton. The protein resides in the cell projection. Its function is as follows. Functions as actin-binding component of the Arp2/3 complex which is involved in regulation of actin polymerization and together with an activating nucleation-promoting factor (NPF) mediates the formation of branched actin networks. Seems to contact the mother actin filament. Arp2/3 complex plays a critical role in the control of cell morphogenesis via the modulation of cell polarity development. The sequence is that of Actin-related protein 2/3 complex subunit 2B (ARPC2B) from Arabidopsis thaliana (Mouse-ear cress).